Consider the following 158-residue polypeptide: Ribonuclease HI (158 aa).

An RNase H type-1 domain is found at 3-144; the sequence is ELKLIHIFTD…CDQLARAAAE (142 aa). Asp-12, Glu-50, Asp-72, and Asp-136 together coordinate Mg(2+).

This sequence belongs to the RNase H family. Monomer. Requires Mg(2+) as cofactor.

It is found in the cytoplasm. It carries out the reaction Endonucleolytic cleavage to 5'-phosphomonoester.. Functionally, endonuclease that specifically degrades the RNA of RNA-DNA hybrids. The chain is Ribonuclease HI from Shewanella oneidensis (strain ATCC 700550 / JCM 31522 / CIP 106686 / LMG 19005 / NCIMB 14063 / MR-1).